The sequence spans 390 residues: MKKIALTALAVFSLAASAAYADVVKVGVIGPFSGPFALQGKNFKAGIDAYMAEHGNKVGDDTVEVVYRDVPQADPAQSKALAQELVVKEGVQYLAGFYFTPDAMAVTPILKQGNVPMVVMNAATSSIVTKSPYVVRTSFTTWQTSTPIARVALDKGVKKVISVVSDYGPGVDAENAFKAAFTDAGGEVVEAIRMPLATNDFSPIMQRIKDSGAQGVFAFLPSGPTTFGFMKAYVDNGLKSSGIQLFAPGDLTQESDLPALGENALGVLTTFHYAVSHDSPENRKFVEEARKAIGNPAELSFPSVGAYDGMHVIYKMIEATGGKKDAAKAVEAVKGMEWVSPRGPVSIDPESRHITQNIYLREVAKADDGTYYNKEIQTFEKQGDPGLKAQ.

Positions 1–21 (MKKIALTALAVFSLAASAAYA) are cleaved as a signal peptide.

This sequence belongs to the leucine-binding protein family.

Its function is as follows. Component of an amino-acid transport system. The chain is Leu/Ile/Val-binding protein homolog 6 from Brucella abortus (strain 2308).